Reading from the N-terminus, the 479-residue chain is Serine palmitoyltransferase 1 (479 aa).

The Lumenal segment spans residues 1-16 (MFLFDIYNNILYYTKE). Residues 17 to 37 (FIVTSTSPNLFIHGLMAVFII) traverse the membrane as a helical segment. Topologically, residues 38–479 (YLLTKRPFKP…KCTSFVLESN (442 aa)) are cytoplasmic.

It belongs to the class-II pyridoxal-phosphate-dependent aminotransferase family. As to quaternary structure, forms a heterodimer with sptB. The cofactor is pyridoxal 5'-phosphate.

It localises to the endoplasmic reticulum membrane. The enzyme catalyses L-serine + hexadecanoyl-CoA + H(+) = 3-oxosphinganine + CO2 + CoA. Its pathway is lipid metabolism; sphingolipid metabolism. Its function is as follows. Component of serine palmitoyltransferase (SPT), which catalyzes the committed step in the synthesis of sphingolipids, the condensation of serine with palmitoyl CoA to form the long chain base 3-ketosphinganine. In Dictyostelium discoideum (Social amoeba), this protein is Serine palmitoyltransferase 1 (sptA).